The primary structure comprises 500 residues: NAD(P)H-quinone oxidoreductase chain 4, chloroplastic (500 aa).

Transmembrane regions (helical) follow at residues 4 to 24 (FPWL…LFFL), 35 to 55 (YTLC…CYHF), 87 to 107 (FGPI…AWPV), 134 to 154 (LLLF…LLSM), 167 to 187 (FILY…GIGL), 208 to 228 (ALEI…SPII), 242 to 262 (HYST…YGLV), 272 to 292 (AHSI…VYAA), 305 to 325 (IAYS…SITD), 330 to 350 (GALL…FLAG), 364 to 384 (MGGM…LSMA), 386 to 406 (LALP…GIIT), 416 to 436 (ILIT…SLSM), and 462 to 482 (LFVS…PDFL).

It belongs to the complex I subunit 4 family.

It is found in the plastid. The protein resides in the chloroplast thylakoid membrane. It carries out the reaction a plastoquinone + NADH + (n+1) H(+)(in) = a plastoquinol + NAD(+) + n H(+)(out). The catalysed reaction is a plastoquinone + NADPH + (n+1) H(+)(in) = a plastoquinol + NADP(+) + n H(+)(out). The protein is NAD(P)H-quinone oxidoreductase chain 4, chloroplastic of Pelargonium hortorum (Common geranium).